A 323-amino-acid chain; its full sequence is Beta-ketoacyl-[acyl-carrier-protein] synthase III 1 (323 aa).

Active-site residues include cysteine 114 and histidine 254. Positions 255 to 259 are ACP-binding; it reads QANLR. The active site involves asparagine 284.

Belongs to the thiolase-like superfamily. FabH family. In terms of assembly, homodimer.

The protein resides in the cytoplasm. The enzyme catalyses malonyl-[ACP] + acetyl-CoA + H(+) = 3-oxobutanoyl-[ACP] + CO2 + CoA. It participates in lipid metabolism; fatty acid biosynthesis. Its function is as follows. Catalyzes the condensation reaction of fatty acid synthesis by the addition to an acyl acceptor of two carbons from malonyl-ACP. Catalyzes the first condensation reaction which initiates fatty acid synthesis and may therefore play a role in governing the total rate of fatty acid production. Possesses both acetoacetyl-ACP synthase and acetyl transacylase activities. Its substrate specificity determines the biosynthesis of branched-chain and/or straight-chain of fatty acids. In Lactiplantibacillus plantarum (strain ATCC BAA-793 / NCIMB 8826 / WCFS1) (Lactobacillus plantarum), this protein is Beta-ketoacyl-[acyl-carrier-protein] synthase III 1.